Reading from the N-terminus, the 133-residue chain is Basic leucine zipper transcriptional factor ATF-like 3 (133 aa).

Residues 1 to 68 (MSQGPPAGGV…EHESLEQENS (68 aa)) form a disordered region. Phosphoserine is present on residues serine 2 and serine 24. A compositionally biased stretch (polar residues) spans 11-24 (LQSSVAAPGNQPQS). A bZIP domain is found at 28 to 91 (DDRKVRRREK…RHLTEALKEH (64 aa)). The basic motif stretch occupies residues 30-55 (RKVRRREKNRVAAQRSRKKQTQKSDK). Basic and acidic residues predominate over residues 51-68 (QKSDKLHEEHESLEQENS). Residues 56-84 (LHEEHESLEQENSVLRREIAKLKEELRHL) form a leucine-zipper region.

This sequence belongs to the bZIP family. Heterodimer; heterodimerizes with JUN family proteins. Interacts with JUN. Ubiquitously expressed.

Its subcellular location is the nucleus. Its function is as follows. AP-1 family transcription factor that controls the differentiation of CD8(+) thymic conventional dendritic cells in the immune system. Acts via the formation of a heterodimer with JUN family proteins that recognizes and binds DNA sequence 5'-TGA[CG]TCA-3' and regulates expression of target genes. Required for development of CD8-alpha(+) classical dendritic cells (cDCs) and related CD103(+) dendritic cells that cross-present antigens to CD8 T-cells and produce interleukin-12 (IL12) in response to pathogens. The polypeptide is Basic leucine zipper transcriptional factor ATF-like 3 (Batf3) (Rattus norvegicus (Rat)).